The primary structure comprises 478 residues: Growth/differentiation factor 10 (478 aa).

The first 33 residues, 1 to 33 (MAHVPARTSPGPGPQLLLLLLPLFLLLLRDVAG), serve as a signal peptide directing secretion. A propeptide spanning residues 34 to 368 (SHRAPAWSAL…EKTMQKARRK (335 aa)) is cleaved from the precursor. N-linked (GlcNAc...) asparagine glycans are attached at residues N118, N156, and N281. Residues 266-319 (YDPFPAGDPEPRAAPNNSADPRVRRAAQATGPLQDNELPGLDERPPRAHAQHFH) form a disordered region. 3 cysteine pairs are disulfide-bonded: C376/C443, C405/C475, and C409/C477. N469 is a glycosylation site (N-linked (GlcNAc...) asparagine).

Belongs to the TGF-beta family. As to quaternary structure, homodimer or heterodimer. Can form a non-covalent complex of the mature region and the pro-region. As to expression, expressed in femur, brain, lung, skeletal muscle, pancreas and testis.

It is found in the secreted. Functionally, growth factor involved in osteogenesis and adipogenesis. Plays an inhibitory role in the process of osteoblast differentiation via SMAD2/3 pathway. Plays an inhibitory role in the process of adipogenesis. The polypeptide is Growth/differentiation factor 10 (Homo sapiens (Human)).